The following is a 363-amino-acid chain: Replication factor C subunit 4 (363 aa).

M1 is subject to N-acetylmethionine. Residues M1–K36 form a disordered region. 2 positions are modified to N6-acetyllysine: K6 and K13. G78–T85 serves as a coordination point for ATP.

It belongs to the activator 1 small subunits family. Subunit of the RFC complex, an heteropentameric complex consisting of a large subunit RFC1 and four small subunits RFC2, RFC3, RFC4 and RFC5; the RFC complex interacts with PCNA. Forms an heterotetrameric complex with RFC2, RFC3 and RFC5; this complex has ATPase activity but is not stimulated by PCNA. The heterotetramer of subunits RFC2, RFC3, RFC4 and RFC5 interacts with RAD17. Interacts with ATAD5. Interacts with CTF18. Interacts with CNTD1; this interaction facilitates crossover formation.

It is found in the nucleus. Subunit of the replication factor C (RFC) complex which acts during elongation of primed DNA templates by DNA polymerases delta and epsilon, and is necessary for ATP-dependent loading of proliferating cell nuclear antigen (PCNA) onto primed DNA. The RFC4 subunit probably functions as a scaffold on which the other complex components can assemble. This is Replication factor C subunit 4 (RFC4) from Homo sapiens (Human).